A 318-amino-acid chain; its full sequence is Ribonuclease Z (318 aa).

The Zn(2+) site is built by His-63, His-65, Asp-67, His-68, His-142, Asp-210, and His-268. Catalysis depends on Asp-67, which acts as the Proton acceptor.

The protein belongs to the RNase Z family. As to quaternary structure, homodimer. It depends on Zn(2+) as a cofactor.

The enzyme catalyses Endonucleolytic cleavage of RNA, removing extra 3' nucleotides from tRNA precursor, generating 3' termini of tRNAs. A 3'-hydroxy group is left at the tRNA terminus and a 5'-phosphoryl group is left at the trailer molecule.. In terms of biological role, zinc phosphodiesterase, which displays some tRNA 3'-processing endonuclease activity. Probably involved in tRNA maturation, by removing a 3'-trailer from precursor tRNA. This chain is Ribonuclease Z, found in Thermobifida fusca (strain YX).